A 1048-amino-acid chain; its full sequence is Selenate reductase subunit A (1048 aa).

The segment at residues Met-1–Ser-39 is a signal peptide (tat-type signal). Residues Glu-56 to Tyr-129 enclose the 4Fe-4S Mo/W bis-MGD-type domain. Residues Cys-63, Cys-66, Cys-70, and Cys-115 each coordinate [4Fe-4S] cluster. Residue Cys-270 coordinates Mo-bis(molybdopterin guanine dinucleotide).

It belongs to the prokaryotic molybdopterin-containing oxidoreductase family. As to quaternary structure, the complex is composed of three subunits: SrdA, SrdB and SrdC. It depends on [4Fe-4S] cluster as a cofactor. Mo-bis(molybdopterin guanine dinucleotide) serves as cofactor. Post-translationally, predicted to be exported by the Tat system. The position of the signal peptide cleavage has not been experimentally proven.

It is found in the secreted. It catalyses the reaction selenite + a quinone + H2O = selenate + a quinol. Its function is as follows. Component of the respiratory selenate reductase complex, which catalyzes the reduction of selenate to selenite. SrdA is probably the catalytic subunit that reduces selenate. The protein is Selenate reductase subunit A of Mesobacillus selenatarsenatis (strain DSM 18680 / JCM 14380 / FERM P-15431 / SF-1).